Here is a 254-residue protein sequence, read N- to C-terminus: MESYLVDTYQGVPYTAAVQTDLVEKDQLPARLTVWFPLFQTNTPPTVLLEQLKTLTITTLYTASQNGPILKVNASAQGAAMSALPKSFDVSASVALDDYSKLEFDKLTVCELKAVYLTTMKPYGMVSKFVNSAKAVGKKTHDLIALCDFLDLEKGVPVTIPAYIKSVSIKESESATVEAAIGGEADQAITQARIAPYAGLIMIMTMNNPKGIFKKLGAGVQVIVELGAYVQAESISRICRNWSHQGTRYVLKSR.

Belongs to the paramyxoviruses M protein family. In terms of assembly, interacts with glycoprotein G (via N-terminus), and protein N. Interacts with protein M2-1; this interaction mediates the association between proteins M and N.

The protein resides in the virion. It is found in the host cytoplasm. Its subcellular location is the host nucleus. It localises to the host cell membrane. In terms of biological role, has a crucial role in virus assembly and budding. The matrix interacts with the RNP complex and this association serves two functions: facilitate virion assembly and inhibit the viral transcriptase activity. Early in infection, M is localized to the nucleus and may inhibit host cell transcription. Later on, M can associate with lipid rafts supposely by interacting with the cytoskeleton and with the cytoplasmic tail of glycoprotein G. The binding of M to host membrane is stabilized by the surface expression of the viral glycoproteins. These interactions may allow virus formation by mediating association of the nucleocapsid with the nascent envelope. The polypeptide is Matrix protein (M) (Avian metapneumovirus (isolate Canada goose/Minnesota/15a/2001) (AMPV)).